Here is a 306-residue protein sequence, read N- to C-terminus: MAALLGRDLLSLADISSTELQELLQLATQLKSQQLKLQCNKVLGLLFSKASTRTRVSFTVAMYQLGGQVIDLNPNVTQVSRGEPLQDTARVLDRYLDILAIRTFAQQDLETFAHYAKIPVINALTDAEHPCQVLADLLTIQESFNTLAGLTLTYVGDGNNMANSLMLGCALVGMNVRIATPDGYEPDSQIVEQARAIANNKTEVLLTHDPELAAKGSTVLYTDVWASMGQETEADNRMPIFQPYQISEQLLSLAAPEAIVLHCLPAHRGEEITEAVIEGSQSRVWEQAENRLHAQKALLASILGAE.

Residues S51–T54, Q78, R102, and H129–Q132 contribute to the carbamoyl phosphate site. Residues N160, D223, and S227–M228 each bind L-ornithine. Carbamoyl phosphate-binding positions include C263–L264 and R291.

It belongs to the aspartate/ornithine carbamoyltransferase superfamily. OTCase family.

It localises to the cytoplasm. The enzyme catalyses carbamoyl phosphate + L-ornithine = L-citrulline + phosphate + H(+). It functions in the pathway amino-acid biosynthesis; L-arginine biosynthesis; L-arginine from L-ornithine and carbamoyl phosphate: step 1/3. In terms of biological role, reversibly catalyzes the transfer of the carbamoyl group from carbamoyl phosphate (CP) to the N(epsilon) atom of ornithine (ORN) to produce L-citrulline. This is Ornithine carbamoyltransferase (argF) from Nostoc punctiforme (strain ATCC 29133 / PCC 73102).